Reading from the N-terminus, the 613-residue chain is Transcription factor cbf11 (613 aa).

Residues 32 to 58 (NNGLHNQEDGAGGRNENSERVGSGSPG) are disordered.

The protein belongs to the Su(H) family.

Its subcellular location is the cytoplasm. It is found in the nucleus. Transcription factor that behaves as a negative regulator of adhesion. Recognizes specifically the canonical CSL response element GTGA/GGAA. May also play a cbf12-antagonistic role in the regulation of a number of other important processes such as extracellular material production, colony morphogenesis, ploidy maintenance, or meiosis. This is Transcription factor cbf11 (cbf11) from Schizosaccharomyces pombe (strain 972 / ATCC 24843) (Fission yeast).